Reading from the N-terminus, the 122-residue chain is Large ribosomal subunit protein bL19c (122 aa).

The protein belongs to the bacterial ribosomal protein bL19 family.

It localises to the plastid. The protein resides in the chloroplast. This Rhodomonas salina (Cryptomonas salina) protein is Large ribosomal subunit protein bL19c (rpl19).